The following is a 437-amino-acid chain: Ribosomal protein uS12 methylthiotransferase RimO (437 aa).

The 111-residue stretch at 4 to 114 (PRIGFISLGC…VMNAVHEHLP (111 aa)) folds into the MTTase N-terminal domain. The [4Fe-4S] cluster site is built by C13, C49, C78, C145, C149, and C152. In terms of domain architecture, Radical SAM core spans 131–368 (LTPRHYAYLK…MEVQERISAA (238 aa)). The TRAM domain occupies 371-437 (RTRIGRTETV…AHDLWARLAD (67 aa)).

The protein belongs to the methylthiotransferase family. RimO subfamily. It depends on [4Fe-4S] cluster as a cofactor.

Its subcellular location is the cytoplasm. It carries out the reaction L-aspartate(89)-[ribosomal protein uS12]-hydrogen + (sulfur carrier)-SH + AH2 + 2 S-adenosyl-L-methionine = 3-methylsulfanyl-L-aspartate(89)-[ribosomal protein uS12]-hydrogen + (sulfur carrier)-H + 5'-deoxyadenosine + L-methionine + A + S-adenosyl-L-homocysteine + 2 H(+). Catalyzes the methylthiolation of an aspartic acid residue of ribosomal protein uS12. The polypeptide is Ribosomal protein uS12 methylthiotransferase RimO (Methylococcus capsulatus (strain ATCC 33009 / NCIMB 11132 / Bath)).